Reading from the N-terminus, the 331-residue chain is Cathepsin 7 (331 aa).

A signal peptide spans 1-17 (MTVAVFLAILCLRAALA). Residues 18–111 (APRPDYSLDA…GKHIQKRNVK (94 aa)) constitute a propeptide, activation peptide. The short motif at 33-50 (KRNNAKTYSPEEEKQRRA) is the Nuclear localization signal element. The N-linked (GlcNAc...) asparagine glycan is linked to N72. 3 cysteine pairs are disulfide-bonded: C133/C176, C167/C209, and C267/C320. Residue C136 is part of the active site. Residues H274 and N298 contribute to the active site.

Belongs to the peptidase C1 family.

The protein localises to the endosome. Its subcellular location is the lysosome. The protein resides in the cytoplasm. It localises to the perinuclear region. It is found in the golgi apparatus. The protein localises to the nucleus. Its subcellular location is the secreted. The protein resides in the extracellular space. Its function is as follows. Involved in trophoblast cell proliferation and differentiation probably by affecting mitotic cell cycle progression. Proteolytic activity and nuclear localization are essential for its role in cell cycle progression. The sequence is that of Cathepsin 7 (Cts7) from Rattus norvegicus (Rat).